The primary structure comprises 75 residues: CLAVATA3/ESR (CLE)-related protein 33 (75 aa).

An N-terminal signal peptide occupies residues 1–22 (MASWRMLCFVLLFTSILICHDA). Pro67 and Pro70 each carry hydroxyproline. O-linked (Ara...) hydroxyproline glycosylation occurs at Pro70.

This sequence belongs to the CLV3/ESR signal peptide family. The O-glycosylation (arabinosylation) of the hydroxyproline Pro-70 enhances binding affinity of the CLE33p peptide for its receptor. In terms of tissue distribution, expressed in root vasculature.

Its subcellular location is the secreted. It localises to the extracellular space. Signaling peptide involved in the regulation of root colonization by arbuscular mycorrhizal (AM) fungi. Moves from root to shoot to function with the receptor kinase SUNN, in a signaling pathway that repress strigolactone biosynthetic genes and strigolactone content in the roots, and consequently reduces the promotion of further colonization by AM fungi. This is CLAVATA3/ESR (CLE)-related protein 33 from Medicago truncatula (Barrel medic).